Here is a 174-residue protein sequence, read N- to C-terminus: uncharacterized protein (174 aa).

It belongs to the NAD(P)H dehydrogenase (quinone) family.

This is an uncharacterized protein from Bacillus subtilis (strain 168).